A 447-amino-acid chain; its full sequence is Exodeoxyribonuclease 7 large subunit (447 aa).

The protein belongs to the XseA family. As to quaternary structure, heterooligomer composed of large and small subunits.

The protein resides in the cytoplasm. It carries out the reaction Exonucleolytic cleavage in either 5'- to 3'- or 3'- to 5'-direction to yield nucleoside 5'-phosphates.. Its function is as follows. Bidirectionally degrades single-stranded DNA into large acid-insoluble oligonucleotides, which are then degraded further into small acid-soluble oligonucleotides. In Streptococcus mutans serotype c (strain ATCC 700610 / UA159), this protein is Exodeoxyribonuclease 7 large subunit.